A 284-amino-acid polypeptide reads, in one-letter code: Averufin oxidase A (284 aa).

Residues 1–23 (MPTYALLGATGATGSAILRCLLA) form the signal peptide. Residues N62, N86, and N190 are each glycosylated (N-linked (GlcNAc...) asparagine).

This sequence belongs to the avfA family.

It functions in the pathway mycotoxin biosynthesis. Its function is as follows. Averufin oxidase A; part of the fragmented gene cluster that mediates the biosynthesis of dothistromin (DOTH), a polyketide toxin very similar in structure to the aflatoxin precursor, versicolorin B. The first step of the pathway is the conversion of acetate to norsolorinic acid (NOR) and requires the fatty acid synthase subunits hexA and hexB, as well as the polyketide synthase pksA. PksA combines a hexanoyl starter unit and 7 malonyl-CoA extender units to synthesize the precursor NOR. The hexanoyl starter unit is provided to the acyl-carrier protein (ACP) domain by the fungal fatty acid synthase hexA/hexB. The second step is the conversion of NOR to averantin (AVN) and requires the norsolorinic acid ketoreductase nor1, which catalyzes the dehydration of norsolorinic acid to form (1'S)-averantin. The cytochrome P450 monooxygenase avnA then catalyzes the hydroxylation of AVN to 5'hydroxyaverantin (HAVN). The next step is performed by adhA that transforms HAVN to averufin (AVF). Averufin might then be converted to hydroxyversicolorone by cypX and avfA. Hydroxyversicolorone is further converted versiconal hemiacetal acetate (VHA) by moxY. VHA is then the substrate for the versiconal hemiacetal acetate esterase est1 to yield versiconal (VAL). Versicolorin B synthase vbsA then converts VAL to versicolorin B (VERB) by closing the bisfuran ring. Then, the activity of the versicolorin B desaturase verB leads to versicolorin A (VERA). DotB, a predicted chloroperoxidase, may perform epoxidation of the A-ring of VERA. Alternatively, a cytochrome P450, such as cypX or avnA could catalyze this step. It is also possible that another, uncharacterized, cytochrome P450 enzyme is responsible for this step. Opening of the epoxide could potentially be achieved by the epoxide hydrolase epoA. However, epoA seems not to be required for DOTH biosynthesis, but other epoxide hydrolases may have the ability to complement this hydrolysis. Alternatively, opening of the epoxide ring could be achieved non-enzymatically. The next step is the deoxygenation of ring A to yield the 5,8-dihydroxyanthraquinone which is most likely catalyzed by the NADPH dehydrogenase encoded by ver1. The last stages of DOTH biosynthesis are proposed to involve hydroxylation of the bisfuran. OrdB and norB might have oxidative roles here. An alternative possibility is that cytochrome P450 monoogenases such as avnA and cypX might perform these steps in addition to previously proposed steps. The chain is Averufin oxidase A from Dothistroma septosporum (strain NZE10 / CBS 128990) (Red band needle blight fungus).